The following is a 132-amino-acid chain: ATP synthase epsilon chain (132 aa).

Belongs to the ATPase epsilon chain family. As to quaternary structure, F-type ATPases have 2 components, CF(1) - the catalytic core - and CF(0) - the membrane proton channel. CF(1) has five subunits: alpha(3), beta(3), gamma(1), delta(1), epsilon(1). CF(0) has three main subunits: a, b and c.

It is found in the cell inner membrane. Functionally, produces ATP from ADP in the presence of a proton gradient across the membrane. The sequence is that of ATP synthase epsilon chain from Cereibacter sphaeroides (strain ATCC 17025 / ATH 2.4.3) (Rhodobacter sphaeroides).